Reading from the N-terminus, the 338-residue chain is Heme A synthase (338 aa).

5 helical membrane-spanning segments follow: residues 6–26 (ITKWLSISCIMVIAMIVIGGI), 93–113 (GRITALIYIVPLIYFYFKGII), 118–138 (IAPYIIALLLLYVQGFMGWYM), 154–174 (LAFHLIIAVIIYHILFYQLIK), and 201–221 (VIYLQIFLGALVAGLDAGLIY). Residue His-256 coordinates heme. The next 3 helical transmembrane spans lie at 258–278 (LGGYSVFLVVMALATYLLKIE), 285–305 (IAYFLIIALLMQISTGIITLL), and 308–328 (VPIIIASTHQFFAIVLLSVII). His-316 is a binding site for heme.

It belongs to the COX15/CtaA family. Type 2 subfamily. Interacts with CtaB. Heme b is required as a cofactor.

It is found in the cell membrane. The catalysed reaction is Fe(II)-heme o + 2 A + H2O = Fe(II)-heme a + 2 AH2. It functions in the pathway porphyrin-containing compound metabolism; heme A biosynthesis; heme A from heme O: step 1/1. In terms of biological role, catalyzes the conversion of heme O to heme A by two successive hydroxylations of the methyl group at C8. The first hydroxylation forms heme I, the second hydroxylation results in an unstable dihydroxymethyl group, which spontaneously dehydrates, resulting in the formyl group of heme A. This Rickettsia canadensis (strain McKiel) protein is Heme A synthase.